We begin with the raw amino-acid sequence, 283 residues long: Thymidylate synthase (283 aa).

Position 22 (R22) interacts with dUMP. Residue C160 is the Nucleophile of the active site. Residues 180 to 183 (RSCD), N191, and 221 to 223 (HIY) each bind dUMP. D183 contacts (6R)-5,10-methylene-5,6,7,8-tetrahydrofolate. S282 is a binding site for (6R)-5,10-methylene-5,6,7,8-tetrahydrofolate.

It belongs to the thymidylate synthase family. Bacterial-type ThyA subfamily. In terms of assembly, homodimer.

It is found in the cytoplasm. It catalyses the reaction dUMP + (6R)-5,10-methylene-5,6,7,8-tetrahydrofolate = 7,8-dihydrofolate + dTMP. It functions in the pathway pyrimidine metabolism; dTTP biosynthesis. Catalyzes the reductive methylation of 2'-deoxyuridine-5'-monophosphate (dUMP) to 2'-deoxythymidine-5'-monophosphate (dTMP) while utilizing 5,10-methylenetetrahydrofolate (mTHF) as the methyl donor and reductant in the reaction, yielding dihydrofolate (DHF) as a by-product. This enzymatic reaction provides an intracellular de novo source of dTMP, an essential precursor for DNA biosynthesis. In Pasteurella multocida (strain Pm70), this protein is Thymidylate synthase.